Consider the following 396-residue polypeptide: MLVLVVNCGSSSIKYKLMDMEQESVLLSGLSERIGIAGSRIKQENNKGEELVLEQDLPDHKAALETILKCITDAKYGAIKDTAEIKAVGHRVVHGGEKFNKSVVIDAELMKVLEEMSELAPLHNPPNIIGIKTCQELMPHAAQVAVFDTAFHSAMPKHAYTYAVPYEYYEKYKIRRYGFHGTSHKFVSHRAAEILGKPVEDLKIIVCHLGNGSSISAVGNGVSQDTSMGFTPLPGLPMGTRTGDMDPAIVPFLMEKEQLGVNEIGNVLNKKSGVLGVSGISSDFRDLEDAASKGNERAELALNMFAYGIIKYIGAYTAALGGLDAVVFTGGIGENSKTMRAKVLNGLAYTGLQIDEEKNNTRGKEVIVSKPGAPFVAMVVPTNEELMIARETKELV.

Residue Asn-7 participates in Mg(2+) binding. Lys-14 is a binding site for ATP. Substrate is bound at residue Arg-91. The active-site Proton donor/acceptor is Asp-148. Residues 208-212, 283-285, and 331-335 contribute to the ATP site; these read HLGNG, DFR, and GIGEN. A Mg(2+)-binding site is contributed by Glu-384.

It belongs to the acetokinase family. In terms of assembly, homodimer. Requires Mg(2+) as cofactor. The cofactor is Mn(2+).

The protein localises to the cytoplasm. It carries out the reaction acetate + ATP = acetyl phosphate + ADP. The protein operates within metabolic intermediate biosynthesis; acetyl-CoA biosynthesis; acetyl-CoA from acetate: step 1/2. Catalyzes the formation of acetyl phosphate from acetate and ATP. Can also catalyze the reverse reaction. This Desulforamulus reducens (strain ATCC BAA-1160 / DSM 100696 / MI-1) (Desulfotomaculum reducens) protein is Acetate kinase.